A 911-amino-acid polypeptide reads, in one-letter code: Isoleucine--tRNA ligase (911 aa).

Residues 57–67 carry the 'HIGH' region motif; the sequence is PYANGDIHMGH. Position 551 (E551) interacts with L-isoleucyl-5'-AMP. The 'KMSKS' region motif lies at 592–596; that stretch reads KMSKS. K595 lines the ATP pocket. Residues C881, C884, C901, and C904 each coordinate Zn(2+).

Belongs to the class-I aminoacyl-tRNA synthetase family. IleS type 1 subfamily. In terms of assembly, monomer. Zn(2+) serves as cofactor.

The protein resides in the cytoplasm. The enzyme catalyses tRNA(Ile) + L-isoleucine + ATP = L-isoleucyl-tRNA(Ile) + AMP + diphosphate. Catalyzes the attachment of isoleucine to tRNA(Ile). As IleRS can inadvertently accommodate and process structurally similar amino acids such as valine, to avoid such errors it has two additional distinct tRNA(Ile)-dependent editing activities. One activity is designated as 'pretransfer' editing and involves the hydrolysis of activated Val-AMP. The other activity is designated 'posttransfer' editing and involves deacylation of mischarged Val-tRNA(Ile). This Exiguobacterium sibiricum (strain DSM 17290 / CCUG 55495 / CIP 109462 / JCM 13490 / 255-15) protein is Isoleucine--tRNA ligase.